The chain runs to 47 residues: Large ribosomal subunit protein bL34 (47 aa).

The protein belongs to the bacterial ribosomal protein bL34 family.

The chain is Large ribosomal subunit protein bL34 from Rhodococcus opacus (strain B4).